The following is a 603-amino-acid chain: Proline--tRNA ligase (603 aa).

It belongs to the class-II aminoacyl-tRNA synthetase family. ProS type 1 subfamily. As to quaternary structure, homodimer.

Its subcellular location is the cytoplasm. It catalyses the reaction tRNA(Pro) + L-proline + ATP = L-prolyl-tRNA(Pro) + AMP + diphosphate. In terms of biological role, catalyzes the attachment of proline to tRNA(Pro) in a two-step reaction: proline is first activated by ATP to form Pro-AMP and then transferred to the acceptor end of tRNA(Pro). As ProRS can inadvertently accommodate and process non-cognate amino acids such as alanine and cysteine, to avoid such errors it has two additional distinct editing activities against alanine. One activity is designated as 'pretransfer' editing and involves the tRNA(Pro)-independent hydrolysis of activated Ala-AMP. The other activity is designated 'posttransfer' editing and involves deacylation of mischarged Ala-tRNA(Pro). The misacylated Cys-tRNA(Pro) is not edited by ProRS. This Arthrobacter sp. (strain FB24) protein is Proline--tRNA ligase.